A 115-amino-acid polypeptide reads, in one-letter code: Large ribosomal subunit protein bL19 (115 aa).

This sequence belongs to the bacterial ribosomal protein bL19 family.

This protein is located at the 30S-50S ribosomal subunit interface and may play a role in the structure and function of the aminoacyl-tRNA binding site. In Baumannia cicadellinicola subsp. Homalodisca coagulata, this protein is Large ribosomal subunit protein bL19.